Consider the following 200-residue polypeptide: Holliday junction branch migration complex subunit RuvA (200 aa).

Residues 1 to 64 (MYAYFRGRLV…EDALQLYGFA (64 aa)) form a domain I region. Residues 65–143 (TEEEKQLFRL…KLAPVGSAVA (79 aa)) form a domain II region. The segment at 144 to 154 (SVAADRGGFRE) is flexible linker. Positions 154–200 (EDAVNALMTLGFPRPVANQAVGCALEPEPDASLEVVIKRALATMHNR) are domain III.

The protein belongs to the RuvA family. As to quaternary structure, homotetramer. Forms an RuvA(8)-RuvB(12)-Holliday junction (HJ) complex. HJ DNA is sandwiched between 2 RuvA tetramers; dsDNA enters through RuvA and exits via RuvB. An RuvB hexamer assembles on each DNA strand where it exits the tetramer. Each RuvB hexamer is contacted by two RuvA subunits (via domain III) on 2 adjacent RuvB subunits; this complex drives branch migration. In the full resolvosome a probable DNA-RuvA(4)-RuvB(12)-RuvC(2) complex forms which resolves the HJ.

It localises to the cytoplasm. Functionally, the RuvA-RuvB-RuvC complex processes Holliday junction (HJ) DNA during genetic recombination and DNA repair, while the RuvA-RuvB complex plays an important role in the rescue of blocked DNA replication forks via replication fork reversal (RFR). RuvA specifically binds to HJ cruciform DNA, conferring on it an open structure. The RuvB hexamer acts as an ATP-dependent pump, pulling dsDNA into and through the RuvAB complex. HJ branch migration allows RuvC to scan DNA until it finds its consensus sequence, where it cleaves and resolves the cruciform DNA. In Chlorobium phaeovibrioides (strain DSM 265 / 1930) (Prosthecochloris vibrioformis (strain DSM 265)), this protein is Holliday junction branch migration complex subunit RuvA.